The sequence spans 172 residues: Adenine phosphoribosyltransferase (172 aa).

This sequence belongs to the purine/pyrimidine phosphoribosyltransferase family. In terms of assembly, homodimer.

The protein localises to the cytoplasm. The enzyme catalyses AMP + diphosphate = 5-phospho-alpha-D-ribose 1-diphosphate + adenine. Its pathway is purine metabolism; AMP biosynthesis via salvage pathway; AMP from adenine: step 1/1. In terms of biological role, catalyzes a salvage reaction resulting in the formation of AMP, that is energically less costly than de novo synthesis. In Desulforamulus reducens (strain ATCC BAA-1160 / DSM 100696 / MI-1) (Desulfotomaculum reducens), this protein is Adenine phosphoribosyltransferase.